The chain runs to 268 residues: Phosphate import ATP-binding protein PstB (268 aa).

One can recognise an ABC transporter domain in the interval 22-263; it reads LAVRNLNFYY…PKQQQTQDYI (242 aa). Residue 54 to 61 participates in ATP binding; that stretch reads GPSGCGKS.

It belongs to the ABC transporter superfamily. Phosphate importer (TC 3.A.1.7) family. As to quaternary structure, the complex is composed of two ATP-binding proteins (PstB), two transmembrane proteins (PstC and PstA) and a solute-binding protein (PstS).

The protein localises to the cell inner membrane. The enzyme catalyses phosphate(out) + ATP + H2O = ADP + 2 phosphate(in) + H(+). In terms of biological role, part of the ABC transporter complex PstSACB involved in phosphate import. Responsible for energy coupling to the transport system. The polypeptide is Phosphate import ATP-binding protein PstB (Gluconobacter oxydans (strain 621H) (Gluconobacter suboxydans)).